A 175-amino-acid polypeptide reads, in one-letter code: Epididymal-specific lipocalin-8 (175 aa).

Positions 1-22 are cleaved as a signal peptide; it reads MEARLLSNVCGFFLVFLLQAES. N-linked (GlcNAc...) asparagine glycosylation is found at N66 and N74. Cysteines 79 and 166 form a disulfide.

This sequence belongs to the calycin superfamily. Lipocalin family. In terms of tissue distribution, predominantly expressed in epididymis.

The protein resides in the secreted. Functionally, may play a role in male fertility. May act as a retinoid carrier protein within the epididymis. This chain is Epididymal-specific lipocalin-8 (Lcn8), found in Mus musculus (Mouse).